The chain runs to 256 residues: H-2 class II histocompatibility antigen, A-D alpha chain (256 aa).

Positions 1–23 are cleaved as a signal peptide; sequence MPCSRALILGVLALNTMLSLCGG. Positions 24–111 are alpha-1; sequence EDDIEADHVG…KRSNFTPATN (88 aa). Over 24–218 the chain is Extracellular; the sequence is EDDIEADHVG…IPAPMSELTE (195 aa). Positions 112 to 205 are alpha-2; the sequence is EAPQATVFPK…GLEEPVLKHW (94 aa). In terms of domain architecture, Ig-like C1-type spans 114–206; it reads PQATVFPKSP…LEEPVLKHWE (93 aa). C134 and C190 are oxidised to a cystine. The N-linked (GlcNAc...) asparagine glycan is linked to N145. The connecting peptide stretch occupies residues 206–218; sequence EPEIPAPMSELTE. Residues 219–244 form a helical membrane-spanning segment; that stretch reads TVVCALGLSVGLVGIVVGTIFIIQGL. The Cytoplasmic portion of the chain corresponds to 245 to 256; sequence RSGGTSRHPGPL.

It belongs to the MHC class II family.

The protein resides in the membrane. The chain is H-2 class II histocompatibility antigen, A-D alpha chain (H2-Aa) from Mus musculus (Mouse).